Reading from the N-terminus, the 287-residue chain is Probable ribosomal RNA small subunit methyltransferase A (287 aa).

Positions 29, 31, 56, 77, 102, and 117 each coordinate S-adenosyl-L-methionine.

This sequence belongs to the class I-like SAM-binding methyltransferase superfamily. rRNA adenine N(6)-methyltransferase family. RsmA subfamily.

Its subcellular location is the cytoplasm. Specifically dimethylates two adjacent adenosines in the loop of a conserved hairpin near the 3'-end of 16S rRNA in the 30S particle. May play a critical role in biogenesis of 30S subunits. The sequence is that of Probable ribosomal RNA small subunit methyltransferase A from Methanosarcina barkeri (strain Fusaro / DSM 804).